The sequence spans 293 residues: 4-hydroxy-tetrahydrodipicolinate synthase (293 aa).

T44 serves as a coordination point for pyruvate. The active-site Proton donor/acceptor is the Y132. K160 serves as the catalytic Schiff-base intermediate with substrate. I202 serves as a coordination point for pyruvate.

It belongs to the DapA family. Homotetramer; dimer of dimers.

Its subcellular location is the cytoplasm. The catalysed reaction is L-aspartate 4-semialdehyde + pyruvate = (2S,4S)-4-hydroxy-2,3,4,5-tetrahydrodipicolinate + H2O + H(+). It participates in amino-acid biosynthesis; L-lysine biosynthesis via DAP pathway; (S)-tetrahydrodipicolinate from L-aspartate: step 3/4. In terms of biological role, catalyzes the condensation of (S)-aspartate-beta-semialdehyde [(S)-ASA] and pyruvate to 4-hydroxy-tetrahydrodipicolinate (HTPA). The polypeptide is 4-hydroxy-tetrahydrodipicolinate synthase (Pelagibacter ubique (strain HTCC1062)).